A 69-amino-acid chain; its full sequence is Large ribosomal subunit protein bL31 (69 aa).

Zn(2+) contacts are provided by Cys-17, Cys-19, Cys-37, and Cys-40.

This sequence belongs to the bacterial ribosomal protein bL31 family. Type A subfamily. In terms of assembly, part of the 50S ribosomal subunit. Zn(2+) serves as cofactor.

In terms of biological role, binds the 23S rRNA. This chain is Large ribosomal subunit protein bL31, found in Clostridium novyi (strain NT).